Consider the following 260-residue polypeptide: Proteasome assembly chaperone 2 (260 aa).

The protein belongs to the PSMG2 family. Forms a heterodimer with psmg1. In terms of processing, degraded by the proteasome upon completion of 20S proteasome maturation.

It is found in the nucleus. Its function is as follows. Chaperone protein which promotes assembly of the 20S proteasome as part of a heterodimer with psmg1. This is Proteasome assembly chaperone 2 from Danio rerio (Zebrafish).